Reading from the N-terminus, the 97-residue chain is MGEVNIAPLGDRIIVKPIEREVMKSGIIIPDTAKEKPMEGEVVAAGPGKLGEKGERAPMDVKKGDKVLYGKYSGTEVKINDKNYLIMHQDDVLGIIK.

This sequence belongs to the GroES chaperonin family. As to quaternary structure, heptamer of 7 subunits arranged in a ring. Interacts with the chaperonin GroEL.

The protein localises to the cytoplasm. In terms of biological role, together with the chaperonin GroEL, plays an essential role in assisting protein folding. The GroEL-GroES system forms a nano-cage that allows encapsulation of the non-native substrate proteins and provides a physical environment optimized to promote and accelerate protein folding. GroES binds to the apical surface of the GroEL ring, thereby capping the opening of the GroEL channel. The protein is Co-chaperonin GroES of Elusimicrobium minutum (strain Pei191).